The sequence spans 212 residues: Large ribosomal subunit protein uL4 (212 aa).

It belongs to the universal ribosomal protein uL4 family. Part of the 50S ribosomal subunit.

One of the primary rRNA binding proteins, this protein initially binds near the 5'-end of the 23S rRNA. It is important during the early stages of 50S assembly. It makes multiple contacts with different domains of the 23S rRNA in the assembled 50S subunit and ribosome. Functionally, forms part of the polypeptide exit tunnel. This is Large ribosomal subunit protein uL4 from Caulobacter vibrioides (strain ATCC 19089 / CIP 103742 / CB 15) (Caulobacter crescentus).